The following is a 1276-amino-acid chain: MNIDSNIIKNENLINANNHTDRRDVHDSLAEAPEKITELKKNHWEELLPSSSNWYCTSVADCNENQIYIYACKSNVSIFNIKSKKFIGELNGHTDRVTSVGFFKRFESKNDESYKWCITGSDDKTVRIWKFNSNDDDHNEDTEIGDDFKHGSGGGGSDGGGGDDVNNFYGNKSSNFCIYYHQEHKAGVTCVVASPLVPDLVLSGDKAGALVIYRTLTNHVFPIPPIIGNNISISTLAFSPNHSDLVAIGYLNGIVLIYNFVIRSTVCKISAHSADVLSIVWFDSTIIQKNNIFHDNNINDQDDNNSNHRNRIFLATCSKDKAIKIWKQVGEKIESGFTNIYQFNPSKYSIQHSSSSGGGGINQNDKQRVWLTLSWSPESPQYLLSNSLTADVLIWDLINFKSPPEKFQSSHQRLIFNITQIPNSDGSLAKTTATTETTTKNKIKNKDKKQSQIKLNNKVITVSLDRQIIIWENLKAKIKIQGLGGFVYSIDTCSYSPNTFAIGCGDNTIRLWSPTENSKDAYESKTLWKGIQSKVTSLSICKDYGFSNSNLIAFGMDDGRVGVYNINTNQSKIFPGGHKNEIYEIIWKPPPTPTPQKNINNNNNNNNNNNNNNNNNNNNNNNNNNNNNNNNNNNNINNNNNNNSNNEQQPNKLYSIGNNEIYEWDYNDFNKSFTNMTPIIQQLNPKETFSKHKTDINFNLNGDMISIGYSDGTIDIFTSEFLFLTRIREHKKLINRVQWNHFKENEMILASASTDKKVIIYKLSKIGNQNENEKKIDNEKGKENENEKGKENENENENENENENENENENEIENIVNNNNENDTEIEIKNINKNENVDKEEMVENNNNNNIKYKIEILHQFIGHKNNVCSVSWSNVDPNLLGSASADGTVQVWNIKSKEAISNMRGHDGRVFTVCWSLLDPNLLVSGGEDQTVRLWNYSTQPFKTVTESQIKKSPQPELSISLNKKITEQQQQQQQPQSPIKSNPDQSNNPSLVPPILLTSVTSTSNTTATATTITQITESLPKKRPIFLLNKDIVQRQDSSQYVVPLAKYFTTNDQDSINTNETKQEYEFGSNSENNNSKIEAIFSEKKEIINKLVQKESLELLKIDDVENYISLNSWNPANLKQALYQVIKNGKLTGNIVSLSIQAGREIFESICNLYSQQLICIGDYHLAVSYLLMIGKVNEAIEVYRNTLLFQEAIILAKSRFLPDDPIINKLFTEWAKQTETSHPIHSIKCYLATINDQSLNSKQELLKLLSSVQTKQIIKIQSDLEQILK.

The tract at residues 53 to 55 (NWY) is interaction with U4 snRNA. WD repeat units lie at residues 92–139 (GHTD…DDHN), 183–223 (EHKA…VFPI), 228–268 (GNNI…TVCK), 271–336 (AHSA…IESG), 364–405 (NDKQ…SPPE), 438–481 (TTKN…IKIQ), 485–522 (GFVYSIDTCSYSPNTFAIGCGDNTIRLWSPTENSKDAY), and 530–574 (GIQS…SKIF). Positions 138-157 (HNEDTEIGDDFKHGSGGGGS) are disordered. The interval 586–652 (IWKPPPTPTP…NSNNEQQPNK (67 aa)) is disordered. Over residues 598-646 (NINNNNNNNNNNNNNNNNNNNNNNNNNNNNNNNNNNNNINNNNNNNSNN) the composition is skewed to low complexity. WD repeat units lie at residues 688 to 727 (TFSKHKTDINFNLNGDMISIGYSDGTIDIFTSEFLFLTRI) and 729 to 771 (EHKK…NQNE). Residues 772–793 (NEKKIDNEKGKENENEKGKENE) show a composition bias toward basic and acidic residues. The disordered stretch occupies residues 772–809 (NEKKIDNEKGKENENEKGKENENENENENENENENENE). Residues 778–829 (NEKGKENENEKGKENENENENENENENENENENEIENIVNNNNENDTEIEIK) adopt a coiled-coil conformation. Residues 794–809 (NENENENENENENENE) are compositionally biased toward acidic residues. WD repeat units lie at residues 863-903 (GHKN…AISN) and 906-946 (GHDG…FKTV). Residues 967-997 (ITEQQQQQQQPQSPIKSNPDQSNNPSLVPPI) are disordered. The segment covering 979 to 992 (SPIKSNPDQSNNPS) has biased composition (polar residues).

This sequence belongs to the WD repeat gemin-5 family. In terms of assembly, part of the core SMN complex.

It is found in the nucleus. Its subcellular location is the nucleoplasm. The protein localises to the gem. The protein resides in the cytoplasm. The SMN complex catalyzes the assembly of small nuclear ribonucleoproteins (snRNPs), the building blocks of the spliceosome, and thereby plays an important role in the splicing of cellular pre-mRNAs. Most spliceosomal snRNPs contain a common set of Sm proteins SNRPB, SNRPD1, SNRPD2, SNRPD3, SNRPE, SNRPF and SNRPG that assemble in a heptameric protein ring on the Sm site of the small nuclear RNA to form the core snRNP (Sm core). In the cytosol, the Sm proteins SNRPD1, SNRPD2, SNRPE, SNRPF and SNRPG are trapped in an inactive 6S pICln-Sm complex by the chaperone CLNS1A that controls the assembly of the core snRNP. To assemble core snRNPs, the SMN complex accepts the trapped 5Sm proteins from CLNS1A forming an intermediate. Binding of snRNA inside 5Sm ultimately triggers eviction of the SMN complex, thereby allowing binding of SNRPD3 and SNRPB to complete assembly of the core snRNP. Within the SMN complex, GEMIN5 recognizes and delivers the small nuclear RNAs (snRNAs) to the SMN complex. Binds to the 7-methylguanosine cap of RNA molecules. In Dictyostelium discoideum (Social amoeba), this protein is Component of gems protein 5 (gemin5).